Reading from the N-terminus, the 229-residue chain is Large ribosomal subunit protein uL1 (229 aa).

The protein belongs to the universal ribosomal protein uL1 family. As to quaternary structure, part of the 50S ribosomal subunit.

Functionally, binds directly to 23S rRNA. The L1 stalk is quite mobile in the ribosome, and is involved in E site tRNA release. In terms of biological role, protein L1 is also a translational repressor protein, it controls the translation of the L11 operon by binding to its mRNA. This is Large ribosomal subunit protein uL1 from Staphylococcus aureus (strain MRSA252).